We begin with the raw amino-acid sequence, 144 residues long: Transcriptional regulator MraZ (144 aa).

2 SpoVT-AbrB domains span residues 5–47 and 76–121; these read EYQY…PLDR and AHKT…SQER.

The protein belongs to the MraZ family. Forms oligomers.

It is found in the cytoplasm. It localises to the nucleoid. This is Transcriptional regulator MraZ from Thermus thermophilus (strain ATCC BAA-163 / DSM 7039 / HB27).